The sequence spans 194 residues: uncharacterized protein (194 aa).

Positions 62–93 (GGAGRRTSKAQRVHPQPSHQRQPPPPQHPGPY) are disordered.

In terms of tissue distribution, expressed most abundantly in the brain at protein level. Present in cortex, cerebellum and midbrain. Found in neurons. Elevated expressions detected in Alzheimer brain samples. Also expressed in testis.

The protein localises to the cytoplasm. This is an uncharacterized protein from Homo sapiens (Human).